Reading from the N-terminus, the 65-residue chain is Large ribosomal subunit protein bL33c (65 aa).

It belongs to the bacterial ribosomal protein bL33 family.

The protein localises to the plastid. Its subcellular location is the chloroplast. This chain is Large ribosomal subunit protein bL33c, found in Psilotum nudum (Whisk fern).